A 436-amino-acid polypeptide reads, in one-letter code: Ribosomal protein uS12 methylthiotransferase RimO (436 aa).

Residues 2-114 (PNLYLVSLGC…IDEMILKKQN (113 aa)) form the MTTase N-terminal domain. 6 residues coordinate [4Fe-4S] cluster: C11, C45, C77, C146, C150, and C153. One can recognise a Radical SAM core domain in the interval 132–363 (TGSSYHAYIK…IKKQIEGSFK (232 aa)). The TRAM domain maps to 363 to 434 (KSLVGEVIKV…KDKLIGEIIC (72 aa)).

The protein belongs to the methylthiotransferase family. RimO subfamily. Requires [4Fe-4S] cluster as cofactor.

Its subcellular location is the cytoplasm. It catalyses the reaction L-aspartate(89)-[ribosomal protein uS12]-hydrogen + (sulfur carrier)-SH + AH2 + 2 S-adenosyl-L-methionine = 3-methylsulfanyl-L-aspartate(89)-[ribosomal protein uS12]-hydrogen + (sulfur carrier)-H + 5'-deoxyadenosine + L-methionine + A + S-adenosyl-L-homocysteine + 2 H(+). Its function is as follows. Catalyzes the methylthiolation of an aspartic acid residue of ribosomal protein uS12. The polypeptide is Ribosomal protein uS12 methylthiotransferase RimO (Campylobacter fetus subsp. fetus (strain 82-40)).